Consider the following 696-residue polypeptide: Polyribonucleotide nucleotidyltransferase (696 aa).

Mg(2+) is bound by residues D483 and D489. The KH domain maps to P550–I609. The region spanning G619 to K687 is the S1 motif domain.

It belongs to the polyribonucleotide nucleotidyltransferase family. Mg(2+) serves as cofactor.

It localises to the cytoplasm. It catalyses the reaction RNA(n+1) + phosphate = RNA(n) + a ribonucleoside 5'-diphosphate. Involved in mRNA degradation. Catalyzes the phosphorolysis of single-stranded polyribonucleotides processively in the 3'- to 5'-direction. In Geotalea daltonii (strain DSM 22248 / JCM 15807 / FRC-32) (Geobacter daltonii), this protein is Polyribonucleotide nucleotidyltransferase.